The following is a 203-amino-acid chain: Sperm-specific protein PHI-2B/PHI-3 (203 aa).

Residues 1–35 (MPSPSRKSRSRSRSRSKSPKRSPAKKARKTPKKPR) are compositionally biased toward basic residues. Disordered stretches follow at residues 1–46 (MPSP…PSTL) and 104–203 (KTSA…KSKK). In terms of domain architecture, H15 spans 41-120 (KKPSTLSMIV…GATGSFRVGK (80 aa)). Basic residues-rich tracts occupy residues 126 to 140 (KKAK…KSSK) and 147 to 203 (KAKK…KSKK).

PL-II* and PL-IV are produced by post-translational cleavage of a common precursor. Sperm.

It is found in the nucleus. Its subcellular location is the chromosome. Its function is as follows. Linker histones are implicated in chromatin remodeling and/or transcriptional regulation during spermiogenesis, the process of spermatid maturation into spermatozoa. Protamines substitute for histones in the chromatin of sperm during the haploid phase of spermatogenesis. They compact sperm DNA into a highly condensed, stable and inactive complex. The polypeptide is Sperm-specific protein PHI-2B/PHI-3 (Mytilus trossulus (Blue mussel)).